The chain runs to 185 residues: Ribosome-recycling factor (185 aa).

This sequence belongs to the RRF family.

The protein resides in the cytoplasm. Responsible for the release of ribosomes from messenger RNA at the termination of protein biosynthesis. May increase the efficiency of translation by recycling ribosomes from one round of translation to another. This chain is Ribosome-recycling factor, found in Francisella tularensis subsp. holarctica (strain FTNF002-00 / FTA).